Consider the following 212-residue polypeptide: Ras-related protein Rab-2A (212 aa).

Alanine 2 carries the N-acetylalanine modification. The required for interaction with PRKCI stretch occupies residues 2-19 (AYAYLFKYIIIGDTGVGK). Glycine 16, valine 17, glycine 18, lysine 19, serine 20, cysteine 21, and threonine 38 together coordinate GTP. Serine 20 lines the Mg(2+) pocket. The short motif at 37–42 (LTIGVE) is the Switch 1 element. Residues threonine 38 and aspartate 61 each coordinate Mg(2+). Residues 63–72 (AGQESFRSIT) carry the Switch 2 motif. Positions 64, 119, 120, 122, 150, and 151 each coordinate GTP. Residues 190 to 212 (QHAATNASHGSNQGGQQAGGGCC) are disordered. Gly residues predominate over residues 201 to 212 (NQGGQQAGGGCC). Residues cysteine 211 and cysteine 212 are each lipidated (S-geranylgeranyl cysteine).

The protein belongs to the small GTPase superfamily. Rab family. Interacts with PRKCI. Interacts with TRIP11. Interacts (in GTP-bound form) with GARIN1B. Interacts (GTP-bound) with HOPS complex component VPS39; interaction contributes to obtaining a functional HOPS complex that promotes autophagosome-lysosome membrane fusion driven by STX17-SNAP29-VAMP8. Interacts with VPS41. Requires Mg(2+) as cofactor. Post-translationally, prenylated. Prenylation is required for association with cellular membranes.

It localises to the endoplasmic reticulum-Golgi intermediate compartment membrane. The protein localises to the melanosome. Its subcellular location is the endoplasmic reticulum membrane. The protein resides in the golgi apparatus membrane. It is found in the cytoplasmic vesicle. It localises to the secretory vesicle. The protein localises to the acrosome. Its subcellular location is the autophagosome membrane. The catalysed reaction is GTP + H2O = GDP + phosphate + H(+). With respect to regulation, regulated by guanine nucleotide exchange factors (GEFs) which promote the exchange of bound GDP for free GTP, GTPase activating proteins (GAPs) which increase the GTP hydrolysis activity, and GDP dissociation inhibitors (GDIs) which inhibit the dissociation of the nucleotide from the GTPase. In terms of biological role, the small GTPases Rab are key regulators of intracellular membrane trafficking, from the formation of transport vesicles to their fusion with membranes. Rabs cycle between active GTP-bound and inactive GDP-bound states. In their active state, drive transport of vesicular carriers from donor organelles to acceptor organelles to regulate the membrane traffic that maintains organelle identity and morphology. RAB2A regulates autophagy by promoting autophagosome-lysosome fusion via recruitment of the HOPS endosomal tethering complex; this process involves autophagosomal RAB2A and lysosomal RAB39A recruitment of HOPS subcomplexes VPS39-VPS11 and VPS41-VPS16-VPS18-VPS33A, respectively, which assemble into a functional complex to mediate membrane tethering and SNAREs-driven membrane fusion. Required for protein transport from the endoplasmic reticulum to the Golgi complex. Regulates the compacted morphology of the Golgi. Together with RAB2B, redundantly required for efficient autophagic flux. The protein is Ras-related protein Rab-2A of Mus musculus (Mouse).